Consider the following 388-residue polypeptide: Arrestin-C (388 aa).

This sequence belongs to the arrestin family. In terms of assembly, homodimer; disulfide-linked in response to retinal illumination. Interacts with CXCR4; the interaction is dependent on the C-terminal phosphorylation of CXCR4 and modulates the calcium ion mobilization activity of CXCR4. Interacts with GPR84. As to expression, inner and outer segments, and the inner plexiform regions of the retina.

Its subcellular location is the photoreceptor inner segment. It localises to the cell projection. The protein resides in the cilium. The protein localises to the photoreceptor outer segment. Functionally, may play a role in an as yet undefined retina-specific signal transduction. Could bind to photoactivated-phosphorylated red/green opsins. The polypeptide is Arrestin-C (ARR3) (Homo sapiens (Human)).